The primary structure comprises 155 residues: Large ribosomal subunit protein uL16 (155 aa).

The interval 1 to 22 is disordered; the sequence is MLSPKRTKYRKQQRGRMKGKAT.

It belongs to the universal ribosomal protein uL16 family. Part of the 50S ribosomal subunit.

Its function is as follows. Binds 23S rRNA and is also seen to make contacts with the A and possibly P site tRNAs. This chain is Large ribosomal subunit protein uL16, found in Synechococcus sp. (strain JA-2-3B'a(2-13)) (Cyanobacteria bacterium Yellowstone B-Prime).